The primary structure comprises 468 residues: Putative proline/betaine transporter (468 aa).

12 consecutive transmembrane segments (helical) span residues 20-42 (VFATGIGNAMEWFDFGVYAYTTA), 63-83 (FAALAIAFLLRPIGGIVFGII), 91-111 (VVLTTTIILMALSTLTIGVLP), 115-135 (MIGLWAPALLLLARILQGFST), 164-184 (IGTLSGYIAASIMIALLSFFL), 191-211 (AWGWRIPFILGLFLGLFGLYL), 246-266 (ILVCFVAVVFFNVTNYTVTAY), 284-304 (VLITCVMAVMIPLALFFGKLA), 312-332 (VFLIGTGGLTLLSIVAFSLLN), 336-356 (LPFIILGVFILGFFLSTYEAT), 376-396 (VTFNISVSLFGGTTPLVNSWL), and 403-423 (IYAPAYYLTAISIIGFIVIAV).

It belongs to the major facilitator superfamily. Metabolite:H+ Symporter (MHS) family (TC 2.A.1.6) family.

The protein resides in the cell membrane. In terms of biological role, may be a proton symporter involved in the uptake of osmolytes such as proline and glycine betaine. The polypeptide is Putative proline/betaine transporter (proP) (Staphylococcus haemolyticus (strain JCSC1435)).